The following is a 182-amino-acid chain: 5-formyltetrahydrofolate cyclo-ligase (182 aa).

The tract at residues M1–A21 is disordered. Over residues P11 to A21 the composition is skewed to polar residues. ATP is bound by residues G128–D135 and D167.

This sequence belongs to the 5-formyltetrahydrofolate cyclo-ligase family.

It catalyses the reaction (6S)-5-formyl-5,6,7,8-tetrahydrofolate + ATP = (6R)-5,10-methenyltetrahydrofolate + ADP + phosphate. The protein operates within one-carbon metabolism; tetrahydrofolate interconversion. Functionally, involved in the removal of 5-formyltetrahydrofolate. In vitro, it is a potent inhibitor of various folate-dependent enzymes in the C1 metabolism network and in vivo it might function as a folate storage. 5-formyltetrahydrofolate is also used as an antifolate rescue agent in cancer chemotherapy. Catalyzes the irreversible ATP-dependent transformation of 5-formyltetrahydrofolate (5-CHO-THF) to form 5,10-methenyltetrahydrofolate (5,10-CH=THF). The reverse reaction is catalyzed by the serine hydroxymethyltransferase GlyA (SHMT). The polypeptide is 5-formyltetrahydrofolate cyclo-ligase (ygfA) (Escherichia coli O157:H7).